A 601-amino-acid chain; its full sequence is Elongation factor 4 (601 aa).

The tr-type G domain maps to 5-187 (ENIRNFCIIA…AIVHHLPAPK (183 aa)). Residues 17 to 22 (DHGKST) and 134 to 137 (NKID) contribute to the GTP site.

The protein belongs to the TRAFAC class translation factor GTPase superfamily. Classic translation factor GTPase family. LepA subfamily.

Its subcellular location is the cell inner membrane. The catalysed reaction is GTP + H2O = GDP + phosphate + H(+). Its function is as follows. Required for accurate and efficient protein synthesis under certain stress conditions. May act as a fidelity factor of the translation reaction, by catalyzing a one-codon backward translocation of tRNAs on improperly translocated ribosomes. Back-translocation proceeds from a post-translocation (POST) complex to a pre-translocation (PRE) complex, thus giving elongation factor G a second chance to translocate the tRNAs correctly. Binds to ribosomes in a GTP-dependent manner. This Desulfovibrio desulfuricans (strain ATCC 27774 / DSM 6949 / MB) protein is Elongation factor 4.